The chain runs to 233 residues: Probable tetraheme cytochrome c-type (233 aa).

The N-terminal stretch at 1–28 is a signal peptide; it reads MTRLQKGSIGTLLTGALLGIVLVAVVFG. Heme is bound by residues Cys39, Cys42, Met45, Cys67, Cys70, His71, Glu93, Cys131, Cys134, His135, Cys159, Cys162, His163, and His168. Residues 182–233 are disordered; the sequence is QGKLVLKPEDDGDDEEADEDEDEETEEADDSSDSESASSSDNSDNEDDNNDE. 2 stretches are compositionally biased toward acidic residues: residues 191–214 and 224–233; these read DDGD…DSSD and SDNEDDNNDE.

The protein belongs to the NapC/NirT/NrfH family. Binds 4 heme groups per subunit.

The protein resides in the periplasm. This is Probable tetraheme cytochrome c-type (cycX1) from Nitrosomonas europaea (strain ATCC 19718 / CIP 103999 / KCTC 2705 / NBRC 14298).